We begin with the raw amino-acid sequence, 749 residues long: Phosphate-regulating neutral endopeptidase PHEX (749 aa).

The Cytoplasmic portion of the chain corresponds to 1–20 (MEAETGSTMETGKGTNRGIR). The chain crosses the membrane as a helical; Signal-anchor for type II membrane protein span at residues 21-37 (IALALFIGGTLVLGTLL). The Extracellular portion of the chain corresponds to 38–749 (FLVSQGLLSF…NRGADSCRLW (712 aa)). Positions 53–749 (YCLKPECIEA…NRGADSCRLW (697 aa)) constitute a Peptidase M13 domain. An intrachain disulfide couples Cys54 to Cys59. N-linked (GlcNAc...) asparagine glycosylation is found at Asn71, Asn238, Asn263, Asn290, Asn301, Asn377, and Asn484. 4 disulfide bridges follow: Cys77–Cys733, Cys85–Cys693, Cys142–Cys406, and Cys617–Cys746. A Zn(2+)-binding site is contributed by His580. Glu581 is a catalytic residue. His584 and Glu642 together coordinate Zn(2+). Residue Asp646 is the Proton donor of the active site. Asn736 carries N-linked (GlcNAc...) asparagine glycosylation.

This sequence belongs to the peptidase M13 family. In terms of assembly, interacts with MEPE; the interaction is zinc-dependent (via ASARM motif). Zn(2+) is required as a cofactor. Post-translationally, N-glycosylated. In terms of tissue distribution, expressed in bone, specifically in the osteoid and in osteocytes. Expressed in teeth, specifically in odontoblasts and ameloblasts. Expressed moderately by macrophages in the liver and has minimal expression in brown adipose tissue. Also expressed in suprabasal layers of the skin.

Its subcellular location is the cell membrane. Its function is as follows. Peptidase that cleaves SIBLING (small integrin-binding ligand, N-linked glycoprotein)-derived ASARM peptides, thus regulating their biological activity. Cleaves ASARM peptides between Ser and Glu or Asp residues. Regulates osteogenic cell differentiation and bone mineralization through the cleavage of the MEPE-derived ASARM peptide. Promotes dentin mineralization and renal phosphate reabsorption by cleaving DMP1- and MEPE-derived ASARM peptides. Inhibits the cleavage of MEPE by CTSB/cathepsin B thus preventing MEPE degradation. In Mus musculus (Mouse), this protein is Phosphate-regulating neutral endopeptidase PHEX (Phex).